Here is a 484-residue protein sequence, read N- to C-terminus: Glutamyl-tRNA(Gln) amidotransferase subunit A (484 aa).

Residues Lys77 and Ser152 each act as charge relay system in the active site. The Acyl-ester intermediate role is filled by Ser176.

It belongs to the amidase family. GatA subfamily. Heterotrimer of A, B and C subunits.

The catalysed reaction is L-glutamyl-tRNA(Gln) + L-glutamine + ATP + H2O = L-glutaminyl-tRNA(Gln) + L-glutamate + ADP + phosphate + H(+). Its function is as follows. Allows the formation of correctly charged Gln-tRNA(Gln) through the transamidation of misacylated Glu-tRNA(Gln) in organisms which lack glutaminyl-tRNA synthetase. The reaction takes place in the presence of glutamine and ATP through an activated gamma-phospho-Glu-tRNA(Gln). The chain is Glutamyl-tRNA(Gln) amidotransferase subunit A from Lacticaseibacillus casei (strain BL23) (Lactobacillus casei).